The primary structure comprises 101 residues: ATP synthase subunit c (101 aa).

2 helical membrane passes run 31–51 and 81–101; these read AFAY…GAGQ and AISE…IFVG.

The protein belongs to the ATPase C chain family. As to quaternary structure, F-type ATPases have 2 components, F(1) - the catalytic core - and F(0) - the membrane proton channel. F(1) has five subunits: alpha(3), beta(3), gamma(1), delta(1), epsilon(1). F(0) has three main subunits: a(1), b(2) and c(10-14). The alpha and beta chains form an alternating ring which encloses part of the gamma chain. F(1) is attached to F(0) by a central stalk formed by the gamma and epsilon chains, while a peripheral stalk is formed by the delta and b chains.

It localises to the cell membrane. In terms of biological role, f(1)F(0) ATP synthase produces ATP from ADP in the presence of a proton or sodium gradient. F-type ATPases consist of two structural domains, F(1) containing the extramembraneous catalytic core and F(0) containing the membrane proton channel, linked together by a central stalk and a peripheral stalk. During catalysis, ATP synthesis in the catalytic domain of F(1) is coupled via a rotary mechanism of the central stalk subunits to proton translocation. Its function is as follows. Key component of the F(0) channel; it plays a direct role in translocation across the membrane. A homomeric c-ring of between 10-14 subunits forms the central stalk rotor element with the F(1) delta and epsilon subunits. The protein is ATP synthase subunit c of Mesomycoplasma hyopneumoniae (strain 232) (Mycoplasma hyopneumoniae).